The chain runs to 571 residues: Hemagglutinin-neuraminidase (571 aa).

The Intravirion portion of the chain corresponds to 1–25 (MEDYSNLSLKSIPKRTCRIIFRTAT). A helical membrane pass occupies residues 26-46 (ILGICTLIVLCSSILHEIIHL). At 47–571 (DVSSGLMDSD…IIPFLRELIP (525 aa)) the chain is on the virion surface side. Cystine bridges form between Cys166-Cys190, Cys180-Cys241, and Cys232-Cys245. The tract at residues 228-233 (NRKSCS) is important for neuraminidase activity. Positions 228–233 (NRKSCS) are involved in neuraminidase activity. N-linked (GlcNAc...) asparagine; by host glycosylation is found at Asn272, Asn284, Asn335, and Asn341. 3 disulfide bridges follow: Cys338–Cys459, Cys370–Cys380, and Cys453–Cys463. N-linked (GlcNAc...) asparagine; by host glycosylation occurs at Asn386. Residues 393–398 (GAEGRL) are sialic receptor-binding site. Residues Asn454, Asn498, Asn501, Asn517, and Asn522 are each glycosylated (N-linked (GlcNAc...) asparagine; by host). Cysteines 535 and 546 form a disulfide.

This sequence belongs to the paramyxoviruses hemagglutinin-neuraminidase family. As to quaternary structure, homotetramer; composed of disulfide-linked homodimers. Interacts with F protein trimer.

Its subcellular location is the virion membrane. The protein localises to the host cell membrane. It carries out the reaction Hydrolysis of alpha-(2-&gt;3)-, alpha-(2-&gt;6)-, alpha-(2-&gt;8)- glycosidic linkages of terminal sialic acid residues in oligosaccharides, glycoproteins, glycolipids, colominic acid and synthetic substrates.. Its function is as follows. Attaches the virus to sialic acid-containing cell receptors and thereby initiating infection. Binding of HN protein to the receptor induces a conformational change that allows the F protein to trigger virion/cell membranes fusion. In terms of biological role, neuraminidase activity ensures the efficient spread of the virus by dissociating the mature virions from the neuraminic acid containing glycoproteins. This is Hemagglutinin-neuraminidase (HN) from Human parainfluenza 2 virus (strain Toshiba) (HPIV-2).